We begin with the raw amino-acid sequence, 218 residues long: 3-dehydroquinate dehydratase (218 aa).

3-dehydroquinate-binding positions include 29–31 and arginine 56; that span reads EFR. The active-site Proton donor/acceptor is the histidine 116. Lysine 142 functions as the Schiff-base intermediate with substrate in the catalytic mechanism. 3-dehydroquinate contacts are provided by arginine 180, serine 200, and glutamine 204.

The protein belongs to the type-I 3-dehydroquinase family. Homodimer.

The catalysed reaction is 3-dehydroquinate = 3-dehydroshikimate + H2O. It functions in the pathway metabolic intermediate biosynthesis; chorismate biosynthesis; chorismate from D-erythrose 4-phosphate and phosphoenolpyruvate: step 3/7. Functionally, involved in the third step of the chorismate pathway, which leads to the biosynthesis of aromatic amino acids. Catalyzes the cis-dehydration of 3-dehydroquinate (DHQ) and introduces the first double bond of the aromatic ring to yield 3-dehydroshikimate. This Methanococcus maripaludis (strain C5 / ATCC BAA-1333) protein is 3-dehydroquinate dehydratase.